The sequence spans 963 residues: IQ motif and SEC7 domain-containing protein 1 (963 aa).

Positions 21–88 are disordered; it reads SGVEGEAPSS…TRRPKLQHST (68 aa). The span at 29–38 shows a compositional bias: polar residues; it reads SSETGTSLDS. Phosphoserine is present on residues Ser89, Ser105, and Ser107. The region spanning 134 to 163 is the IQ domain; it reads TRHAARTIQTAFRQYQMNKNFERLRSSMSE. Phosphoserine occurs at positions 180, 249, and 253. 2 disordered regions span residues 312–332 and 349–513; these read LSPP…ESDL and KEDK…RNSW. 2 stretches are compositionally biased toward basic and acidic residues: residues 366-376 and 430-446; these read ERQEQRLRVEH and LPRE…RPLD. Positions 471–489 are enriched in low complexity; that stretch reads DSINSTSNSNDTINCSSES. 2 positions are modified to phosphoserine: Ser512 and Ser515. One can recognise an SEC7 domain in the interval 517–710; it reads AFSNDVIRKR…MGIYERIRKR (194 aa). Residues 774 to 866 form the PH domain; the sequence is HQREIFLFND…LRESIAEVQE (93 aa). The stretch at 848–879 forms a coiled coil; it reads QDRKKFTDDLRESIAEVQEMEKHRIESELEKQ. Ser892 bears the Phosphoserine mark. Tyr911 bears the Phosphotyrosine mark. The segment at 922–947 is disordered; sequence LSSSLRDLSEAGKRGRRSSAGSLESN. Phosphoserine is present on residues Ser924 and Ser925.

The protein belongs to the BRAG family. Interacts with ARF1 and ARF6. Interacts with GRIA2; the interaction is required for ARF6 activation. In terms of tissue distribution, expressed in brain, ovary, heart, lung, liver, kidney and leukocytes. Moderate expression was also detected in lung, skeletal muscle, placenta, small intestine, pancreas, spleen and testis.

Its subcellular location is the cytoplasm. The protein resides in the nucleus. The protein localises to the postsynaptic density. It is found in the cytoplasmic vesicle. It localises to the secretory vesicle. Its subcellular location is the synaptic vesicle. Its function is as follows. Guanine nucleotide exchange factor for ARF1 and ARF6. Guanine nucleotide exchange factor activity is enhanced by lipid binding. Accelerates GTP binding by ARFs of all three classes. Guanine nucleotide exchange protein for ARF6, mediating internalization of beta-1 integrin. Involved in neuronal development. In neurons, plays a role in the control of vesicle formation by endocytoc cargo. Upon long term depression, interacts with GRIA2 and mediates the activation of ARF6 to internalize synaptic AMPAR receptors. In Homo sapiens (Human), this protein is IQ motif and SEC7 domain-containing protein 1.